Reading from the N-terminus, the 171-residue chain is Ribulose bisphosphate carboxylase small subunit, chloroplastic (171 aa).

The N-terminal 50 residues, 1 to 50, are a transit peptide targeting the chloroplast; the sequence is MATGAGAGAATVVSAFTGLKSTAQFPSSFKMSNAAAEWEQKTTSNGGRVR.

The protein belongs to the RuBisCO small chain family. In terms of assembly, heterohexadecamer of 8 large and 8 small subunits.

The protein resides in the plastid. It is found in the chloroplast. Functionally, ruBisCO catalyzes two reactions: the carboxylation of D-ribulose 1,5-bisphosphate, the primary event in carbon dioxide fixation, as well as the oxidative fragmentation of the pentose substrate. Both reactions occur simultaneously and in competition at the same active site. Although the small subunit is not catalytic it is essential for maximal activity. This Pinus thunbergii (Japanese black pine) protein is Ribulose bisphosphate carboxylase small subunit, chloroplastic.